The chain runs to 234 residues: MNNKPIVVALDFDDKNAALQLIDRLDPQMCRLKVGKEMFTLFGPELVKDIHSRDFDLFLDLKFHDIPNTVAKAVTAAAELGVWMTNIHATGGLAMMEAAKKALVPYGKDAPLLIAVTVLTSMSDEDLKLIGIDVPAFEHVQRLARLTQQAGLDGVVCSAHEAQLLKSSLGESFKLVTPGIRPAGADKGDQHRVMTPPQAIEAGSDYLVIGRPITKAADPLAALTAIHQSLSIPG.

Substrate contacts are provided by residues Asp-11, Lys-33, 60–69 (DLKFHDIPNT), Thr-120, Arg-181, Gln-190, Gly-210, and Arg-211. The active-site Proton donor is Lys-62.

Belongs to the OMP decarboxylase family. Type 1 subfamily. Homodimer.

The catalysed reaction is orotidine 5'-phosphate + H(+) = UMP + CO2. It functions in the pathway pyrimidine metabolism; UMP biosynthesis via de novo pathway; UMP from orotate: step 2/2. In terms of biological role, catalyzes the decarboxylation of orotidine 5'-monophosphate (OMP) to uridine 5'-monophosphate (UMP). The polypeptide is Orotidine 5'-phosphate decarboxylase (Shewanella sediminis (strain HAW-EB3)).